The primary structure comprises 444 residues: Orexin receptor type 2 (444 aa).

The span at 1–10 (MSGTKLEDSP) shows a compositional bias: basic and acidic residues. The tract at residues 1–30 (MSGTKLEDSPPCRNWSSAPELNETQEPFLN) is disordered. The Extracellular segment spans residues 1–54 (MSGTKLEDSPPCRNWSSAPELNETQEPFLNPTDYDDEEFLRYLWREYLHPKEYE). Asparagine 14 and asparagine 22 each carry an N-linked (GlcNAc...) asparagine glycan. Residues 14–27 (NWSSAPELNETQEP) are compositionally biased toward polar residues. Positions 33–49 (DYDDEEFLRYLWREYLH) are required for response to orexin-A. Residues 55–75 (WVLIAGYIIVFVVALIGNVLV) form a helical membrane-spanning segment. The Cytoplasmic segment spans residues 76–88 (CVAVWKNHHMRTV). Residues 89-110 (TNYFIVNLSLADVLVTITCLPA) form a helical membrane-spanning segment. At 111-127 (TLVVDITETWFFGQSLC) the chain is on the extracellular side. The cysteines at positions 127 and 210 are disulfide-linked. A helical membrane pass occupies residues 128 to 150 (KVIPYLQTVSVSVSVLTLSCIAL). Residues 151-170 (DRWYAICHPLMFKSTAKRAR) lie on the Cytoplasmic side of the membrane. Residues 171–191 (NSIVIIWIVSCIIMIPQAIVM) traverse the membrane as a helical segment. Residues 192–222 (ECSTMLPGLANKTTLFTVCDERWGGEIYPKM) are Extracellular-facing. N-linked (GlcNAc...) asparagine glycosylation is present at asparagine 202. The helical transmembrane segment at 223 to 243 (YHICFFLVTYMAPLCLMVLAY) threads the bilayer. Residues 244–304 (LQIFRKLWCR…QIRARRKTAR (61 aa)) are Cytoplasmic-facing. The chain crosses the membrane as a helical span at residues 305 to 326 (MLMVVLLVFAICYLPISILNVL). Residues 327 to 342 (KRVFGMFTHTEDRETV) lie on the Extracellular side of the membrane. The chain crosses the membrane as a helical span at residues 343–366 (YAWFTFSHWLVYANSAANPIIYNF). The Cytoplasmic portion of the chain corresponds to 367-444 (LSGKFREEFK…ANGAGQLQNW (78 aa)).

Belongs to the G-protein coupled receptor 1 family.

It is found in the cell membrane. Its function is as follows. Nonselective, high-affinity receptor for both orexin-A and orexin-B neuropeptides. Triggers an increase in cytoplasmic Ca(2+) levels in response to orexin-A binding. In Sus scrofa (Pig), this protein is Orexin receptor type 2 (HCRTR2).